Reading from the N-terminus, the 426-residue chain is Serine--tRNA ligase (426 aa).

231 to 233 is an L-serine binding site; that stretch reads TAE. ATP-binding positions include 262 to 264 and valine 278; that span reads RRE. Residue glutamate 285 participates in L-serine binding. 349–352 is a binding site for ATP; that stretch reads EVSS. Serine 384 contacts L-serine.

Belongs to the class-II aminoacyl-tRNA synthetase family. Type-1 seryl-tRNA synthetase subfamily. Homodimer. The tRNA molecule binds across the dimer.

The protein localises to the cytoplasm. The enzyme catalyses tRNA(Ser) + L-serine + ATP = L-seryl-tRNA(Ser) + AMP + diphosphate + H(+). It catalyses the reaction tRNA(Sec) + L-serine + ATP = L-seryl-tRNA(Sec) + AMP + diphosphate + H(+). The protein operates within aminoacyl-tRNA biosynthesis; selenocysteinyl-tRNA(Sec) biosynthesis; L-seryl-tRNA(Sec) from L-serine and tRNA(Sec): step 1/1. Its function is as follows. Catalyzes the attachment of serine to tRNA(Ser). Is also able to aminoacylate tRNA(Sec) with serine, to form the misacylated tRNA L-seryl-tRNA(Sec), which will be further converted into selenocysteinyl-tRNA(Sec). This Chlamydia caviae (strain ATCC VR-813 / DSM 19441 / 03DC25 / GPIC) (Chlamydophila caviae) protein is Serine--tRNA ligase.